We begin with the raw amino-acid sequence, 312 residues long: Ribose-phosphate pyrophosphokinase (312 aa).

Residues 34-36 (DGE) and 93-94 (RQ) contribute to the ATP site. Positions 128 and 167 each coordinate Mg(2+). Residue Lys191 is part of the active site. Residues Arg193 and Asp217 each coordinate D-ribose 5-phosphate.

The protein belongs to the ribose-phosphate pyrophosphokinase family. Class I subfamily. In terms of assembly, homohexamer. Mg(2+) serves as cofactor.

The protein resides in the cytoplasm. The enzyme catalyses D-ribose 5-phosphate + ATP = 5-phospho-alpha-D-ribose 1-diphosphate + AMP + H(+). Its pathway is metabolic intermediate biosynthesis; 5-phospho-alpha-D-ribose 1-diphosphate biosynthesis; 5-phospho-alpha-D-ribose 1-diphosphate from D-ribose 5-phosphate (route I): step 1/1. Functionally, involved in the biosynthesis of the central metabolite phospho-alpha-D-ribosyl-1-pyrophosphate (PRPP) via the transfer of pyrophosphoryl group from ATP to 1-hydroxyl of ribose-5-phosphate (Rib-5-P). In Baumannia cicadellinicola subsp. Homalodisca coagulata, this protein is Ribose-phosphate pyrophosphokinase.